A 586-amino-acid chain; its full sequence is Proline--tRNA ligase (586 aa).

This sequence belongs to the class-II aminoacyl-tRNA synthetase family. ProS type 1 subfamily. As to quaternary structure, homodimer.

The protein localises to the cytoplasm. The enzyme catalyses tRNA(Pro) + L-proline + ATP = L-prolyl-tRNA(Pro) + AMP + diphosphate. Catalyzes the attachment of proline to tRNA(Pro) in a two-step reaction: proline is first activated by ATP to form Pro-AMP and then transferred to the acceptor end of tRNA(Pro). As ProRS can inadvertently accommodate and process non-cognate amino acids such as alanine and cysteine, to avoid such errors it has two additional distinct editing activities against alanine. One activity is designated as 'pretransfer' editing and involves the tRNA(Pro)-independent hydrolysis of activated Ala-AMP. The other activity is designated 'posttransfer' editing and involves deacylation of mischarged Ala-tRNA(Pro). The misacylated Cys-tRNA(Pro) is not edited by ProRS. The chain is Proline--tRNA ligase from Leptospira biflexa serovar Patoc (strain Patoc 1 / Ames).